Consider the following 268-residue polypeptide: MESQTIVEALLLGLLEGLTEFIPVSSTGHILLAGHFLGFNSTGKAFEILIQLGAILAILSVYFRRLWQMLLDLPHDRLTRHFVIGILIAFLPAAIIGALAHDFIKTVLFESPRLICTMLIIGGVILLAVDRMNLKPVYRDVERFPTRLYLQIGLFQCLSLIPGTSRSGSTIVGALLLGVDKRAAAEFSFFLAIPTMVGAFAFDLFKNRNVLTSADLPIIAIGFVAAFVTALFVVRYLLDYVSRNGYSLFGWWRLVVGIVGLVALMIWG.

The next 7 helical transmembrane spans lie at 5-25 (TIVE…IPVS), 43-63 (GKAF…SVYF), 81-101 (HFVI…ALAH), 107-127 (VLFE…VILL), 185-205 (AEFS…FDLF), 214-234 (ADLP…LFVV), and 248-268 (LFGW…MIWG).

The protein belongs to the UppP family.

The protein localises to the cell inner membrane. The enzyme catalyses di-trans,octa-cis-undecaprenyl diphosphate + H2O = di-trans,octa-cis-undecaprenyl phosphate + phosphate + H(+). Its function is as follows. Catalyzes the dephosphorylation of undecaprenyl diphosphate (UPP). Confers resistance to bacitracin. This is Undecaprenyl-diphosphatase 1 from Mesorhizobium japonicum (strain LMG 29417 / CECT 9101 / MAFF 303099) (Mesorhizobium loti (strain MAFF 303099)).